The chain runs to 308 residues: Elongation factor Ts (308 aa).

The segment at Thr-80 to Val-83 is involved in Mg(2+) ion dislocation from EF-Tu.

This sequence belongs to the EF-Ts family.

It localises to the cytoplasm. Functionally, associates with the EF-Tu.GDP complex and induces the exchange of GDP to GTP. It remains bound to the aminoacyl-tRNA.EF-Tu.GTP complex up to the GTP hydrolysis stage on the ribosome. In Verminephrobacter eiseniae (strain EF01-2), this protein is Elongation factor Ts.